The primary structure comprises 382 residues: Na(+)/H(+) antiporter NhaA 2 (382 aa).

The next 11 membrane-spanning stretches (helical) occupy residues 7-27 (MALSETFPGILLIFFTFLALL), 58-78 (LDLWINDGLIAIFFLCIGLEL), 94-114 (SLPIFGALGGMITPALIFAAI), 124-144 (GWAIPTATDIAFAVGILMLLG), 153-173 (LFLLSLAIFDDLGAIVIIALF), 178-198 (LSALAIIICLFCIFALLLLNY), 199-219 (YHITHLSLYVLVGVVLWIAML), 255-275 (NPWVVYFILPLFAFANAGIDI), 291-311 (IILGLFLGKQLGVFIFCFIAI), 327-347 (FYGICILTGIGFTMSLFIDGL), and 361-381 (LAILIASFLSAIVGFIYLKIV).

This sequence belongs to the NhaA Na(+)/H(+) (TC 2.A.33) antiporter family.

It localises to the cell inner membrane. The enzyme catalyses Na(+)(in) + 2 H(+)(out) = Na(+)(out) + 2 H(+)(in). Na(+)/H(+) antiporter that extrudes sodium in exchange for external protons. The protein is Na(+)/H(+) antiporter NhaA 2 of Campylobacter jejuni subsp. doylei (strain ATCC BAA-1458 / RM4099 / 269.97).